A 241-amino-acid chain; its full sequence is Uracil-DNA glycosylase (241 aa).

The Proton acceptor role is filled by Asp-68.

Belongs to the uracil-DNA glycosylase (UDG) superfamily. UNG family.

It localises to the cytoplasm. The enzyme catalyses Hydrolyzes single-stranded DNA or mismatched double-stranded DNA and polynucleotides, releasing free uracil.. In terms of biological role, excises uracil residues from the DNA which can arise as a result of misincorporation of dUMP residues by DNA polymerase or due to deamination of cytosine. In Rhizobium meliloti (strain 1021) (Ensifer meliloti), this protein is Uracil-DNA glycosylase.